We begin with the raw amino-acid sequence, 116 residues long: Alpha-defensin 29 (116 aa).

The first 19 residues, 1-19, serve as a signal peptide directing secretion; the sequence is MKTLVLLSALVLPCFQVQA. Residues 20 to 60 constitute a propeptide that is removed on maturation; that stretch reads DPIQNTDEETKTEEQPEEEDQAVSVSFGGTEGSALQDVAQR. The interval 22–44 is disordered; that stretch reads IQNTDEETKTEEQPEEEDQAVSV. A run of 9 repeats spans residues 65–67, 68–70, 71–73, 74–76, 77–79, 80–82, 83–85, 86–88, and 89–91. A 2 X 3 AA tandem repeats of C-R-X region spans residues 65–70; sequence CRKCRV. Residues 71 to 79 are 3 X 3 AA tandem repeats of C-Q-X; sequence CQKCQVCQK. Positions 80 to 91 are 4 X 3 AA tandem repeats of C-P-X; sequence CPVCPTCPQCPK.

The protein belongs to the alpha-defensin family. In terms of tissue distribution, small bowel.

The protein localises to the secreted. Its function is as follows. Apparent precursor of a secreted, cationic, proline- and cysteine-rich peptide that contains Cys-Pro-Xaa repeats. Unlike cryptdin, the proposed mature peptide region lacks the structural motif characteristic of defensins. The sequence is that of Alpha-defensin 29 from Mus musculus (Mouse).